The chain runs to 689 residues: Elongation factor G (689 aa).

In terms of domain architecture, tr-type G spans 9-283 (AKFRNIGIMA…AIIEFMPSPL (275 aa)). GTP-binding positions include 18–25 (AHIDAGKT), 82–86 (DTPGH), and 136–139 (NKMD).

This sequence belongs to the TRAFAC class translation factor GTPase superfamily. Classic translation factor GTPase family. EF-G/EF-2 subfamily.

The protein localises to the cytoplasm. Catalyzes the GTP-dependent ribosomal translocation step during translation elongation. During this step, the ribosome changes from the pre-translocational (PRE) to the post-translocational (POST) state as the newly formed A-site-bound peptidyl-tRNA and P-site-bound deacylated tRNA move to the P and E sites, respectively. Catalyzes the coordinated movement of the two tRNA molecules, the mRNA and conformational changes in the ribosome. The sequence is that of Elongation factor G from Clostridium botulinum (strain Okra / Type B1).